The sequence spans 146 residues: VQWTAEEKQLITGLWGKVNVADCGAEALARLLIVYPWTQRFFASFGNLSSPTAILGNPMVRAHGKKVLTSFGDAVKNLDNIKNTFAQLSELHCDKLHVDPENFRLLGDILIIVLAAHFAKDFTPECQAAWQKLVRVVAHALARKYH.

The region spanning 2-146 (QWTAEEKQLI…VAHALARKYH (145 aa)) is the Globin domain. Residues His63 and His92 each coordinate heme b.

This sequence belongs to the globin family. As to quaternary structure, heterotetramer of two alpha chains and two beta chains. Red blood cells.

Functionally, involved in oxygen transport from the lung to the various peripheral tissues. This Rhea americana (Greater rhea) protein is Hemoglobin subunit beta (HBB).